We begin with the raw amino-acid sequence, 483 residues long: Glutamyl-tRNA(Gln) amidotransferase subunit A (483 aa).

Catalysis depends on charge relay system residues Lys-76 and Ser-151. Ser-175 (acyl-ester intermediate) is an active-site residue.

Belongs to the amidase family. GatA subfamily. In terms of assembly, heterotrimer of A, B and C subunits.

It carries out the reaction L-glutamyl-tRNA(Gln) + L-glutamine + ATP + H2O = L-glutaminyl-tRNA(Gln) + L-glutamate + ADP + phosphate + H(+). In terms of biological role, allows the formation of correctly charged Gln-tRNA(Gln) through the transamidation of misacylated Glu-tRNA(Gln) in organisms which lack glutaminyl-tRNA synthetase. The reaction takes place in the presence of glutamine and ATP through an activated gamma-phospho-Glu-tRNA(Gln). This chain is Glutamyl-tRNA(Gln) amidotransferase subunit A, found in Pseudomonas entomophila (strain L48).